The following is a 225-amino-acid chain: 2-amino-5-formylamino-6-ribosylaminopyrimidin-4(3H)-one 5'-monophosphate deformylase (225 aa).

Fe cation contacts are provided by E28, H30, D39, and H107.

This sequence belongs to the creatininase superfamily. FAPy deformylase family. Homodimer. Fe(2+) serves as cofactor. Requires Zn(2+) as cofactor.

The catalysed reaction is 2-amino-5-formylamino-6-(5-phospho-D-ribosylamino)pyrimidin-4(3H)-one + H2O = 2,5-diamino-6-(1-D-ribosylamino)pyrimidin-4(3H)-one 5'-phosphate + formate + H(+). It participates in cofactor biosynthesis; coenzyme F420 biosynthesis. Its pathway is cofactor biosynthesis; riboflavin biosynthesis. In terms of biological role, catalyzes the hydrolysis of the formamide of 2-amino-5-formylamino-6-ribosylamino-4(3H)-pyrimidinone 5'-monophosphate (FAPy) to form 2,5-diamino-6-ribosylamino-4(3H)-pyrimidinone 5'-phosphate (APy). This chain is 2-amino-5-formylamino-6-ribosylaminopyrimidin-4(3H)-one 5'-monophosphate deformylase, found in Methanocaldococcus fervens (strain DSM 4213 / JCM 15782 / AG86) (Methanococcus fervens).